The following is a 191-amino-acid chain: Protein GrpE (191 aa).

Positions 1-15 are enriched in basic and acidic residues; that stretch reads MGKEEKNNIEDKALD. The tract at residues 1–35 is disordered; it reads MGKEEKNNIEDKALDNEQEMDQESTSKAVEELSIE.

The protein belongs to the GrpE family. Homodimer.

Its subcellular location is the cytoplasm. Functionally, participates actively in the response to hyperosmotic and heat shock by preventing the aggregation of stress-denatured proteins, in association with DnaK and GrpE. It is the nucleotide exchange factor for DnaK and may function as a thermosensor. Unfolded proteins bind initially to DnaJ; upon interaction with the DnaJ-bound protein, DnaK hydrolyzes its bound ATP, resulting in the formation of a stable complex. GrpE releases ADP from DnaK; ATP binding to DnaK triggers the release of the substrate protein, thus completing the reaction cycle. Several rounds of ATP-dependent interactions between DnaJ, DnaK and GrpE are required for fully efficient folding. This Francisella philomiragia subsp. philomiragia (strain ATCC 25017 / CCUG 19701 / FSC 153 / O#319-036) protein is Protein GrpE.